The sequence spans 245 residues: Ribonuclease PH (245 aa).

Phosphate is bound by residues Arg86 and 124–126 (GTR).

The protein belongs to the RNase PH family. In terms of assembly, homohexameric ring arranged as a trimer of dimers.

The enzyme catalyses tRNA(n+1) + phosphate = tRNA(n) + a ribonucleoside 5'-diphosphate. Its function is as follows. Phosphorolytic 3'-5' exoribonuclease that plays an important role in tRNA 3'-end maturation. Removes nucleotide residues following the 3'-CCA terminus of tRNAs; can also add nucleotides to the ends of RNA molecules by using nucleoside diphosphates as substrates, but this may not be physiologically important. Probably plays a role in initiation of 16S rRNA degradation (leading to ribosome degradation) during starvation. This is Ribonuclease PH from Bacillus cereus (strain G9842).